We begin with the raw amino-acid sequence, 512 residues long: Cytochrome P450 26B1 (512 aa).

Cysteine 441 lines the heme pocket.

This sequence belongs to the cytochrome P450 family. Requires heme as cofactor. Highly expressed in brain, particularly in the cerebellum and pons.

It localises to the endoplasmic reticulum membrane. It is found in the microsome membrane. It catalyses the reaction all-trans-retinoate + reduced [NADPH--hemoprotein reductase] + O2 = all-trans-4-hydroxyretinoate + oxidized [NADPH--hemoprotein reductase] + H2O + H(+). The catalysed reaction is all-trans-retinoate + reduced [NADPH--hemoprotein reductase] + O2 = all-trans-18-hydroxyretinoate + oxidized [NADPH--hemoprotein reductase] + H2O + H(+). A cytochrome P450 monooxygenase involved in the metabolism of retinoates (RAs), the active metabolites of vitamin A, and critical signaling molecules in animals. RAs exist as at least four different isomers: all-trans-RA (atRA), 9-cis-RA, 13-cis-RA, and 9,13-dicis-RA, where atRA is considered to be the biologically active isomer, although 9-cis-RA and 13-cis-RA also have activity. Catalyzes the hydroxylation of atRA primarily at C-4 and C-18, thereby contributing to the regulation of atRA homeostasis and signaling. Hydroxylation of atRA limits its biological activity and initiates a degradative process leading to its eventual elimination. Involved in the convertion of atRA to all-trans-4-oxo-RA. Can oxidize all-trans-13,14-dihydroretinoate (DRA) to metabolites which could include all-trans-4-oxo-DRA, all-trans-4-hydroxy-DRA, all-trans-5,8-epoxy-DRA, and all-trans-18-hydroxy-DRA. Shows preference for the following substrates: atRA &gt; 9-cis-RA &gt; 13-cis-RA. Plays a central role in germ cell development: acts by degrading RAs in the developing testis, preventing STRA8 expression, thereby leading to delay of meiosis. Required for the maintenance of the undifferentiated state of male germ cells during embryonic development in Sertoli cells, inducing arrest in G0 phase of the cell cycle and preventing meiotic entry. Plays a role in skeletal development, both at the level of patterning and in the ossification of bone and the establishment of some synovial joints. Essential for postnatal survival. In terms of biological role, also has a significant activity in oxidation of tazarotenic acid and may therefore metabolize that xenobiotic in vivo. The polypeptide is Cytochrome P450 26B1 (CYP26B1) (Homo sapiens (Human)).